The chain runs to 505 residues: Probable alpha-L-arabinofuranosidase C (505 aa).

Asn-81, Asn-152, Asn-269, and Asn-438 each carry an N-linked (GlcNAc...) asparagine glycan.

This sequence belongs to the glycosyl hydrolase 51 family.

It is found in the secreted. It catalyses the reaction Hydrolysis of terminal non-reducing alpha-L-arabinofuranoside residues in alpha-L-arabinosides.. It participates in glycan metabolism; L-arabinan degradation. In terms of biological role, alpha-L-arabinofuranosidase involved in the degradation of arabinoxylan, a major component of plant hemicellulose. Acts only on small linear 1,5-alpha-linked L-arabinofuranosyl oligosaccharides. The chain is Probable alpha-L-arabinofuranosidase C (abfC) from Aspergillus fumigatus (strain ATCC MYA-4609 / CBS 101355 / FGSC A1100 / Af293) (Neosartorya fumigata).